The sequence spans 29 residues: Lambda-theraphotoxin-Ec2c (29 aa).

Disulfide bonds link cysteine 2–cysteine 16, cysteine 9–cysteine 21, and cysteine 15–cysteine 25.

It belongs to the neurotoxin 30 (phrixotoxin) family. As to expression, expressed by the venom gland.

It localises to the secreted. Its function is as follows. Both insecticidal and vertebrate neurotoxin that potently blocks insect calcium-activated potassium (BKCa) channels (Slo-type) in cockroach dorsal unpaired median (DUM) neurons (IC(50)=24.6 nM). This occurs in the absence of any shifts in the voltage dependence of activation. May interact with the turret and/or loop region of the external entrance to the channel and does not project deeply into the pore of the channel. Also shows toxicity to mice by introcerebroventicular injection. In Eucratoscelus constrictus (African red-rump baboon spider), this protein is Lambda-theraphotoxin-Ec2c.